The sequence spans 255 residues: MVLLLVILIPVLVSSAGTSAHYEMLGTCRMVCDPYGGTKAPSTAATPDRGLMQSLPTFIQGPKGEAGRPGKAGPRGPPGEPGPPGPVGPPGEKGEPGRQGLPGPPGAPGLNAAGAISAATYSTVPKIAFYAGLKRQHEGYEVLKFDDVVTNLGNHYDPTTGKFTCSIPGIYFFTYHVLMRGGDGTSMWADLCKNNQVRASAIAQDADQNYDYASNSVVLHLEPGDEVYIKLDGGKAHGGNNNKYSTFSGFIIYAD.

The signal sequence occupies residues 1-20 (MVLLLVILIPVLVSSAGTSA). The tract at residues 39–109 (KAPSTAATPD…GLPGPPGAPG (71 aa)) is disordered. Positions 61–111 (GPKGEAGRPGKAGPRGPPGEPGPPGPVGPPGEKGEPGRQGLPGPPGAPGLN) constitute a Collagen-like domain. Over residues 75-89 (RGPPGEPGPPGPVGP) the composition is skewed to pro residues. The C1q domain maps to 122–255 (STVPKIAFYA…TFSGFIIYAD (134 aa)).

In terms of assembly, forms homooligomers. Interacts with ADGRB3. Forms heterooligomers with C1QL2 and C1QL4, when proteins are coexpressed; this interaction does not occur after secretion. Highly expressed in brain and white adipose tissue. In gonadal fat pad, expressed at lower levels in adipocytes than in the stromal vascular fraction (VSP), which contains preadipocytes, fibroblasts, endothelial cells and occasional immune cells. Expression exhibits sexually dimorphism, with higher levels in females than in males (at protein level). Tends to be up-regulated in adipose tissue from obese males, but not females. Expressed in glial cells.

The protein localises to the secreted. Its function is as follows. May regulate the number of excitatory synapses that are formed on hippocampus neurons. Has no effect on inhibitory synapses. Plays a role in glucose homeostasis. Via AMPK signaling pathway, stimulates glucose uptake in adipocytes, myotubes and hepatocytes and enhances insulin-stimulated glucose uptake. In a hepatoma cell line, reduces the expression of gluconeogenic enzymes G6PC1 and PCK1 and hence decreases de novo glucose production. The sequence is that of Complement C1q-like protein 3 (C1ql3) from Mus musculus (Mouse).